We begin with the raw amino-acid sequence, 202 residues long: Transcription factor MUTE (202 aa).

The region spanning Met-1–Leu-49 is the bHLH domain.

As to quaternary structure, homodimer. In terms of tissue distribution, leaf epidermis and flowers.

It is found in the nucleus. Its function is as follows. Transcription factor. Together with FMA and SPCH, regulates the stomata formation. Required for the differentiation of stomatal guard cells, by promoting successive asymmetric cell divisions and the formation of guard mother cells. Promotes the conversion of the leaf epidermis into stomata. This is Transcription factor MUTE (MUTE) from Arabidopsis thaliana (Mouse-ear cress).